A 275-amino-acid polypeptide reads, in one-letter code: Large ribosomal subunit protein uL2c (275 aa).

A disordered region spans residues 225 to 275 (MNPCDHPHGGGEGRSPIGRPRPVSPWGKPALGQRTRKGHKYSDQMILRRRK).

Belongs to the universal ribosomal protein uL2 family. As to quaternary structure, part of the 50S ribosomal subunit.

The protein resides in the plastid. It localises to the chloroplast. The chain is Large ribosomal subunit protein uL2c (rpl2) from Oltmannsiellopsis viridis (Marine flagellate).